A 274-amino-acid chain; its full sequence is Methylamine utilization protein MauF (274 aa).

Helical transmembrane passes span 30-50 (WTRA…ALAM), 52-72 (AAHV…LSTW), 105-125 (LGYA…GGIA), 127-147 (LSGF…LAYG), 176-196 (WVVG…YVQT), 202-222 (VTAA…IAIF), and 253-273 (AAIA…MLAL).

Its subcellular location is the cell membrane. It functions in the pathway one-carbon metabolism; methylamine degradation. In Paracoccus versutus (Thiobacillus versutus), this protein is Methylamine utilization protein MauF (mauF).